The sequence spans 555 residues: Efflux pump FUS6 (555 aa).

Residues 1–23 form a disordered region; that stretch reads MASAKDAQPAPEKSLSSDPQPEP. 5 helical membrane passes run 31–51, 67–87, 97–117, 130–150, and 159–179; these read WLIFVAISLTTFLAALDTSII, LYVWIIDAYLLASTATIPIFA, SLTLIAVCIFTLGSGLCGGAH, GIGGGGILTMSEIVVCDMVSI, and IIGGVWAIAAVVAPVMGGAFA. N-linked (GlcNAc...) asparagine glycosylation is present at asparagine 181. Transmembrane regions (helical) follow at residues 186 to 206, 225 to 245, and 253 to 273; these read WIFYINLPIAGVSLVALGLFL, WGGSVLLIGSVTSIVLALSWG, and GWQTIVPLVIGLLALVAFFAY. Asparagine 291 carries N-linked (GlcNAc...) asparagine glycosylation. 6 consecutive transmembrane segments (helical) span residues 297–317, 332–352, 360–380, 393–413, 425–445, and 501–521; these read LLVISFIHSLLLYWICYFLPV, VMLFPIACTSAPAGVAAGITI, VWHFTGFVLMSIACGLFTLLD, ILFGVGTGTVFTSTLPPILAS, AWTFIRNFGSIWGVAIPAAVF, and KVVWQVSLAFCLLGFILCFFV. A glycan (N-linked (GlcNAc...) asparagine) is linked at asparagine 545.

Belongs to the major facilitator superfamily. TCR/Tet family.

It is found in the membrane. Its function is as follows. Efflux pump; part of the gene cluster that mediates the biosynthesis of the mycotoxin fusarin C. Within the cluster, FUS1, FUS2, FUS8 and FUS9 are sufficient for fusarin production. The other FUS cluster members are not essential for fusarin C biosynthesis. This Gibberella fujikuroi (strain CBS 195.34 / IMI 58289 / NRRL A-6831) (Bakanae and foot rot disease fungus) protein is Efflux pump FUS6.